A 576-amino-acid polypeptide reads, in one-letter code: Arginine--tRNA ligase (576 aa).

The 'HIGH' region motif lies at Pro-122–His-132.

The protein belongs to the class-I aminoacyl-tRNA synthetase family. Monomer.

The protein resides in the cytoplasm. It catalyses the reaction tRNA(Arg) + L-arginine + ATP = L-arginyl-tRNA(Arg) + AMP + diphosphate. This is Arginine--tRNA ligase from Yersinia pseudotuberculosis serotype I (strain IP32953).